The primary structure comprises 317 residues: Olfactory receptor 1082 (317 aa).

The Extracellular portion of the chain corresponds to 1 to 26; the sequence is MESGNSTRRFSSFFLLGFTENPQLHF. N-linked (GlcNAc...) asparagine glycosylation occurs at N5. Residues 27-51 traverse the membrane as a helical segment; that stretch reads LIFALFLSMYLVTVLGNLLIIMAII. Residues 52–58 are Cytoplasmic-facing; it reads TQSHLHT. A helical membrane pass occupies residues 59-80; sequence PMYFFLANLSFVDICFTSTTIP. The Extracellular segment spans residues 81 to 101; sequence KMLVNIYTQSKSITYEDCISQ. Residues C98 and C190 are joined by a disulfide bond. A helical membrane pass occupies residues 102–121; it reads MCVFLVFAELGNFLLAVMAY. Residues 122-140 lie on the Cytoplasmic side of the membrane; the sequence is DRYVAXCHPLCYTVIVNHR. A helical membrane pass occupies residues 141 to 159; the sequence is LCILLLLLSWVISIFHAFI. Topologically, residues 160–197 are extracellular; sequence QSLIVLQLTFCGDVKIPHFFCELNQLSQLTCSDNFPSH. Residues 198-220 traverse the membrane as a helical segment; that stretch reads LIMNLVPVMLAAISFSGILYSYF. At 221–237 the chain is on the cytoplasmic side; sequence KIVSSIHSISTVQGKYK. A helical membrane pass occupies residues 238–261; sequence AFSTCASHLSIVSLFYSTGLGVYV. Over 262–273 the chain is Extracellular; sequence SSAVVQSSHSAA. Residues 274-293 form a helical membrane-spanning segment; the sequence is SASVMYTVVTPMLNPFIYSL. Over 294-317 the chain is Cytoplasmic; sequence RNKDVKRALERLLEGNCKVHHWTG.

The protein belongs to the G-protein coupled receptor 1 family. In terms of tissue distribution, olfactory epithelium.

The protein localises to the cell membrane. Functionally, odorant receptor. The sequence is that of Olfactory receptor 1082 (Olr1082) from Rattus norvegicus (Rat).